The sequence spans 1495 residues: VPS10 homolog 2 (1495 aa).

The first 21 residues, 1–21, serve as a signal peptide directing secretion; sequence MALFRALYIIWVFLLIPLFNA. The Lumenal portion of the chain corresponds to 23 to 1369; it reads EFTPKVTRTL…AFREKYPINT (1347 aa). 2 BNR repeats span residues 58 to 67 and 101 to 111; these read ISFDAGENWK and YVTDDQGKSWR. N-linked (GlcNAc...) asparagine glycosylation is present at N148. BNR repeat units follow at residues 229–238, 394–403, and 465–475; these read LSADGGETFK, VSVDNGLTWS, and FISRDSGLTWR. A glycan (N-linked (GlcNAc...) asparagine) is linked at N479. BNR repeat units lie at residues 511 to 520 and 740 to 750; these read YYSLDQGKTW and YISHDGGQTIK. A glycan (N-linked (GlcNAc...) asparagine) is linked at N769. The BNR 8 repeat unit spans residues 837–847; sequence YLTKDGGETFT. The N-linked (GlcNAc...) asparagine glycan is linked to N986. BNR repeat units lie at residues 1119–1129 and 1161–1170; these read FLTTDGGETWT and YSTDFGKTWK. N1279 is a glycosylation site (N-linked (GlcNAc...) asparagine). A helical membrane pass occupies residues 1370-1390; sequence GAYALVFVTILLVIFFAAWFV. Topologically, residues 1391-1495 are cytoplasmic; the sequence is YDRGIRRNGG…GTAQLSCFKI (105 aa).

The protein belongs to the VPS10-related sortilin family.

The protein resides in the golgi apparatus. It localises to the trans-Golgi network membrane. Functions as a sorting receptor in the Golgi compartment required for the intracellular sorting and delivery of soluble vacuolar proteins, like carboxypeptidase Y (CPY) and proteinase A. The sequence is that of VPS10 homolog 2 (VTH2) from Saccharomyces cerevisiae (strain Lalvin EC1118 / Prise de mousse) (Baker's yeast).